A 213-amino-acid chain; its full sequence is Thiamine-phosphate synthase (213 aa).

4-amino-2-methyl-5-(diphosphooxymethyl)pyrimidine contacts are provided by residues 40-44 and Asn75; that span reads QFREK. 2 residues coordinate Mg(2+): Asp76 and Asp95. Residue Ser113 participates in 4-amino-2-methyl-5-(diphosphooxymethyl)pyrimidine binding. 139–141 provides a ligand contact to 2-[(2R,5Z)-2-carboxy-4-methylthiazol-5(2H)-ylidene]ethyl phosphate; sequence TPS. Lys142 contacts 4-amino-2-methyl-5-(diphosphooxymethyl)pyrimidine. 2-[(2R,5Z)-2-carboxy-4-methylthiazol-5(2H)-ylidene]ethyl phosphate contacts are provided by residues Gly171 and 191-192; that span reads IS.

It belongs to the thiamine-phosphate synthase family. The cofactor is Mg(2+).

It catalyses the reaction 2-[(2R,5Z)-2-carboxy-4-methylthiazol-5(2H)-ylidene]ethyl phosphate + 4-amino-2-methyl-5-(diphosphooxymethyl)pyrimidine + 2 H(+) = thiamine phosphate + CO2 + diphosphate. The enzyme catalyses 2-(2-carboxy-4-methylthiazol-5-yl)ethyl phosphate + 4-amino-2-methyl-5-(diphosphooxymethyl)pyrimidine + 2 H(+) = thiamine phosphate + CO2 + diphosphate. The catalysed reaction is 4-methyl-5-(2-phosphooxyethyl)-thiazole + 4-amino-2-methyl-5-(diphosphooxymethyl)pyrimidine + H(+) = thiamine phosphate + diphosphate. Its pathway is cofactor biosynthesis; thiamine diphosphate biosynthesis; thiamine phosphate from 4-amino-2-methyl-5-diphosphomethylpyrimidine and 4-methyl-5-(2-phosphoethyl)-thiazole: step 1/1. Its function is as follows. Condenses 4-methyl-5-(beta-hydroxyethyl)thiazole monophosphate (THZ-P) and 2-methyl-4-amino-5-hydroxymethyl pyrimidine pyrophosphate (HMP-PP) to form thiamine monophosphate (TMP). This chain is Thiamine-phosphate synthase, found in Staphylococcus aureus (strain bovine RF122 / ET3-1).